The primary structure comprises 504 residues: ATP synthase subunit alpha (504 aa).

Residue 169-176 (GDRQTGKT) coordinates ATP.

Belongs to the ATPase alpha/beta chains family. F-type ATPases have 2 components, CF(1) - the catalytic core - and CF(0) - the membrane proton channel. CF(1) has five subunits: alpha(3), beta(3), gamma(1), delta(1), epsilon(1). CF(0) has three main subunits: a(1), b(2) and c(9-12). The alpha and beta chains form an alternating ring which encloses part of the gamma chain. CF(1) is attached to CF(0) by a central stalk formed by the gamma and epsilon chains, while a peripheral stalk is formed by the delta and b chains.

It is found in the cell membrane. It carries out the reaction ATP + H2O + 4 H(+)(in) = ADP + phosphate + 5 H(+)(out). In terms of biological role, produces ATP from ADP in the presence of a proton gradient across the membrane. The alpha chain is a regulatory subunit. This chain is ATP synthase subunit alpha, found in Clostridium kluyveri (strain NBRC 12016).